The following is a 467-amino-acid chain: FAD-dependent oxidoreductase dbaF (467 aa).

The first 20 residues, 1–20 (MKSVLASGALTLAFSLAALA), serve as a signal peptide directing secretion. N-linked (GlcNAc...) asparagine glycosylation is found at Asn96, Asn134, Asn337, Asn391, and Asn451.

It belongs to the beta-cyclopiazonate dehydrogenase family. The cofactor is FAD.

It functions in the pathway secondary metabolite biosynthesis. FAD-dependent oxidoreductase; part of the gene cluster that mediates the biosynthesis of the antibiotic 2,4-dihydroxy-3-methyl-6-(2-oxopropyl)benzaldehyde (DHMBA) and its derivatives. The direct non-reducing polyketide synthase dbaI product is 2,4-dihydroxy-3-methyl-6-(2-oxopropyl)benzaldehyde (DHMBA), produced by condensation of one acetyl-CoA starter unit with 4 malonyl-CoA units and one methylation step. The FAD-dependent monooxygenase dbaH is responsible for the synthesis of yellow pigments derived from the oxidation of DHMBA. The roles of dbaB, C, E and F have still to be determined. The sequence is that of FAD-dependent oxidoreductase dbaF from Emericella nidulans (strain FGSC A4 / ATCC 38163 / CBS 112.46 / NRRL 194 / M139) (Aspergillus nidulans).